We begin with the raw amino-acid sequence, 305 residues long: Glutaminase 2 (305 aa).

Substrate-binding residues include Ser61, Asn113, Glu158, Asn165, Tyr189, Tyr241, and Val259.

Belongs to the glutaminase family. In terms of assembly, homotetramer.

It carries out the reaction L-glutamine + H2O = L-glutamate + NH4(+). The protein is Glutaminase 2 of Clostridium perfringens (strain 13 / Type A).